Reading from the N-terminus, the 125-residue chain is UPF0102 protein CCNA_00142 (125 aa).

Belongs to the UPF0102 family.

In Caulobacter vibrioides (strain NA1000 / CB15N) (Caulobacter crescentus), this protein is UPF0102 protein CCNA_00142.